Reading from the N-terminus, the 25-residue chain is Small ribosomal subunit protein uS19 (25 aa).

Positions 1 to 25 (GHKLGEFAPTRTFRGHKKEDKKVKR) are disordered.

This sequence belongs to the universal ribosomal protein uS19 family.

Protein S19 forms a complex with S13 that binds strongly to the 16S ribosomal RNA. This Acholeplasma laidlawii protein is Small ribosomal subunit protein uS19 (rpsS).